Reading from the N-terminus, the 1448-residue chain is DNA primase TraC (1448 aa).

3 stretches are compositionally biased toward basic and acidic residues: residues 844-856, 863-872, and 882-898; these read ARVQ…RDPN, SAAKEARKTA, and DAQR…RDRQ. Disordered stretches follow at residues 844–915 and 952–982; these read ARVQ…INVP and QGAA…QQAQ. A compositionally biased stretch (low complexity) spans 964-982; sequence AQPAPEAQGEAQKPAQQAQ. Residues 1237 to 1325 enclose the Toprim domain; it reads PALVISEGYA…GKAIFPIFAP (89 aa). The interval 1414 to 1448 is disordered; that stretch reads ISQVQRDEQQHQEQKHVEKKQQQIEQRPRRAARIG. Over residues 1418–1441 the composition is skewed to basic and acidic residues; it reads QRDEQQHQEQKHVEKKQQQIEQRP.

Required for autonomous replication in E.coli. Transferred into the recipient cell during bacterial conjugation. Catalyzes the synthesis of short oligoribonucleotide primers with CpA or pCpA at their 5'-termini on a single-stranded template DNA. The protein is DNA primase TraC (traC) of Escherichia coli.